Here is a 331-residue protein sequence, read N- to C-terminus: DNA-directed RNA polymerase subunit alpha (331 aa).

The segment at 1–237 (MQSSVTEFLI…NQLESFVYLR (237 aa)) is alpha N-terminal domain (alpha-NTD). The alpha C-terminal domain (alpha-CTD) stretch occupies residues 251–331 (FDPILLRPVD…NWPPDNILDN (81 aa)).

Belongs to the RNA polymerase alpha chain family. As to quaternary structure, homodimer. The RNAP catalytic core consists of 2 alpha, 1 beta, 1 beta' and 1 omega subunit. When a sigma factor is associated with the core the holoenzyme is formed, which can initiate transcription.

The catalysed reaction is RNA(n) + a ribonucleoside 5'-triphosphate = RNA(n+1) + diphosphate. DNA-dependent RNA polymerase catalyzes the transcription of DNA into RNA using the four ribonucleoside triphosphates as substrates. This Buchnera aphidicola subsp. Baizongia pistaciae (strain Bp) protein is DNA-directed RNA polymerase subunit alpha.